Here is a 452-residue protein sequence, read N- to C-terminus: Elongation factor Tu, mitochondrial (452 aa).

The N-terminal 43 residues, methionine 1–leucine 43, are a transit peptide targeting the mitochondrion. Positions lysine 55–threonine 251 constitute a tr-type G domain. The G1 stretch occupies residues glycine 64–threonine 71. Aspartate 67, glycine 69, lysine 70, threonine 71, and threonine 72 together coordinate GTP. Threonine 71 contributes to the Mg(2+) binding site. The residue at position 79 (lysine 79) is an N6-acetyllysine. Lysine 88 carries the post-translational modification N6-acetyllysine; alternate. At lysine 88 the chain carries N6-succinyllysine; alternate. The G2 stretch occupies residues glycine 105–asparagine 109. A G3 region spans residues aspartate 126–glycine 129. GTP-binding residues include asparagine 181, aspartate 184, serine 219, alanine 220, and leucine 221. The segment at asparagine 181–aspartate 184 is G4. Residues serine 219–leucine 221 form a G5 region. Residue lysine 234 is modified to N6-succinyllysine. Lysine 256 is modified (N6-acetyllysine). At threonine 278 the chain carries Phosphothreonine. Lysine 286 bears the N6-succinyllysine mark. Serine 312 is subject to Phosphoserine. An N6-acetyllysine mark is found at lysine 361 and lysine 418.

It belongs to the TRAFAC class translation factor GTPase superfamily. Classic translation factor GTPase family. EF-Tu/EF-1A subfamily. As to quaternary structure, interacts with NLRX1. Interacts with ATG16L1.

The protein resides in the mitochondrion. It carries out the reaction GTP + H2O = GDP + phosphate + H(+). Functionally, GTP hydrolase that promotes the GTP-dependent binding of aminoacyl-tRNA to the A-site of ribosomes during protein biosynthesis. Plays a role in the regulation of autophagy and innate immunity. Recruits ATG5-ATG12 and NLRX1 at mitochondria and serves as a checkpoint of the RIGI-MAVS pathway. In turn, inhibits RLR-mediated type I interferon while promoting autophagy. The chain is Elongation factor Tu, mitochondrial from Rattus norvegicus (Rat).